The primary structure comprises 103 residues: Flagellar hook-basal body complex protein FliE (103 aa).

The protein belongs to the FliE family.

It is found in the bacterial flagellum basal body. This chain is Flagellar hook-basal body complex protein FliE, found in Erwinia tasmaniensis (strain DSM 17950 / CFBP 7177 / CIP 109463 / NCPPB 4357 / Et1/99).